A 172-amino-acid polypeptide reads, in one-letter code: S-ribosylhomocysteine lyase (172 aa).

His54, His58, and Cys128 together coordinate Fe cation.

It belongs to the LuxS family. In terms of assembly, homodimer. The cofactor is Fe cation.

The catalysed reaction is S-(5-deoxy-D-ribos-5-yl)-L-homocysteine = (S)-4,5-dihydroxypentane-2,3-dione + L-homocysteine. Involved in the synthesis of autoinducer 2 (AI-2) which is secreted by bacteria and is used to communicate both the cell density and the metabolic potential of the environment. The regulation of gene expression in response to changes in cell density is called quorum sensing. Catalyzes the transformation of S-ribosylhomocysteine (RHC) to homocysteine (HC) and 4,5-dihydroxy-2,3-pentadione (DPD). The protein is S-ribosylhomocysteine lyase of Vibrio vulnificus (strain CMCP6).